A 450-amino-acid chain; its full sequence is Phosphoglucosamine mutase (450 aa).

Ser-101 functions as the Phosphoserine intermediate in the catalytic mechanism. Ser-101, Asp-240, Asp-242, and Asp-244 together coordinate Mg(2+). A Phosphoserine modification is found at Ser-101.

The protein belongs to the phosphohexose mutase family. Requires Mg(2+) as cofactor. Activated by phosphorylation.

It carries out the reaction alpha-D-glucosamine 1-phosphate = D-glucosamine 6-phosphate. Catalyzes the conversion of glucosamine-6-phosphate to glucosamine-1-phosphate. The protein is Phosphoglucosamine mutase of Streptococcus sanguinis (strain SK36).